The chain runs to 66 residues: Large ribosomal subunit protein bL32 (66 aa).

Basic residues predominate over residues 1–19; that stretch reads MAVPKRKMSRSNTRARRSQ. The disordered stretch occupies residues 1–20; that stretch reads MAVPKRKMSRSNTRARRSQW.

It belongs to the bacterial ribosomal protein bL32 family.

The polypeptide is Large ribosomal subunit protein bL32 (Beutenbergia cavernae (strain ATCC BAA-8 / DSM 12333 / CCUG 43141 / JCM 11478 / NBRC 16432 / NCIMB 13614 / HKI 0122)).